We begin with the raw amino-acid sequence, 259 residues long: 5'-nucleotidase SurE 1 (259 aa).

A divalent metal cation contacts are provided by aspartate 16, aspartate 17, serine 48, and asparagine 101.

This sequence belongs to the SurE nucleotidase family. Requires a divalent metal cation as cofactor.

The protein localises to the cytoplasm. The enzyme catalyses a ribonucleoside 5'-phosphate + H2O = a ribonucleoside + phosphate. Nucleotidase that shows phosphatase activity on nucleoside 5'-monophosphates. In Burkholderia lata (strain ATCC 17760 / DSM 23089 / LMG 22485 / NCIMB 9086 / R18194 / 383), this protein is 5'-nucleotidase SurE 1.